The following is a 78-amino-acid chain: Hainantoxin-XX.2 (78 aa).

The signal sequence occupies residues 1 to 23; that stretch reads MKSATLLALSYLLIALYFLICEA. The propeptide occupies 24–47; it reads EHSRYEEHEILEENMGDVVNLEQR. Cystine bridges form between C49–C62, C56–C66, and C61–C77.

It belongs to the hainantoxin family. 20 subfamily. Expressed by the venom gland.

It localises to the secreted. In terms of biological role, moderately inhibits Kv1.1/KCNA1 and Kv1.2/KCNA2 and weakly inhibits Kv1.3/KCNA3, and Kv2.1/KCNB1 voltage-gated potassium channels. The chain is Hainantoxin-XX.2 from Cyriopagopus hainanus (Chinese bird spider).